A 181-amino-acid chain; its full sequence is Monofunctional chorismate mutase (181 aa).

Positions 1-20 (MIRHIAIFLCSLLMCSTTFA) are cleaved as a signal peptide. Positions 21–102 (DSVTSVSLGA…ASKAIQYRYL (82 aa)) constitute a Chorismate mutase domain. 5 residues coordinate substrate: Arg-38, Lys-49, Asp-58, Glu-62, and Gln-98.

The protein localises to the periplasm. The catalysed reaction is chorismate = prephenate. It participates in metabolic intermediate biosynthesis; prephenate biosynthesis; prephenate from chorismate: step 1/1. Its function is as follows. Catalyzes the Claisen rearrangement of chorismate to prephenate. This chain is Monofunctional chorismate mutase, found in Salmonella typhimurium.